Here is a 442-residue protein sequence, read N- to C-terminus: MSSMTPREIVQELDKHIIGQDSAKRAVAIALRNRWRRMQIDEGLREEVTPKNILMIGPTGVGKTEIARRLAKLADAPFIKVEATKFTEVGYVGRDVESIIRDLADMAIKLLREKEMTKVENRALDAAEERILDALLPPARSFNSDAPVEKESAARQVFRKKLREGTLDDKEIDIEIKATPVGVEIMAPPGMEEMTSQLQSMFSNMSGDRKRTKRMKVAEAMKKVKDEEAAKLVNEEEIKQRALRAVEENGIVFIDEIDKVAKRSETSSADVSREGVQRDLLPLIEGCTVSTKFGMLKTDHILFIASGAFHLAKPSDLIPELQGRLPIRVELDALSPSDFQRILTEPNASLTEQYVALMKTEGVDISFSEGAIQRIAEIAWKVNEKTENIGARRLHTVMEKLLEEVSFAAGDKIRDSFEVTAEYVDKCLGELSEDEDLSRYIL.

Residues I18, 60 to 65 (GVGKTE), D255, E320, and R392 contribute to the ATP site.

It belongs to the ClpX chaperone family. HslU subfamily. A double ring-shaped homohexamer of HslV is capped on each side by a ring-shaped HslU homohexamer. The assembly of the HslU/HslV complex is dependent on binding of ATP.

The protein resides in the cytoplasm. ATPase subunit of a proteasome-like degradation complex; this subunit has chaperone activity. The binding of ATP and its subsequent hydrolysis by HslU are essential for unfolding of protein substrates subsequently hydrolyzed by HslV. HslU recognizes the N-terminal part of its protein substrates and unfolds these before they are guided to HslV for hydrolysis. The protein is ATP-dependent protease ATPase subunit HslU of Hahella chejuensis (strain KCTC 2396).